The sequence spans 189 residues: uncharacterized protein (189 aa).

Positions 31–54 (KCENIDDLANRYEVSKQEVEKVFK) form a coiled coil. 4 EF-hand domains span residues 47 to 82 (QEVE…LGID), 83 to 118 (VSPK…KIKL), 120 to 155 (TVKA…TVST), and 157 to 189 (ITVK…CQTV). Ca(2+) contacts are provided by aspartate 60, aspartate 62, serine 64, threonine 66, glutamate 71, aspartate 96, serine 98, aspartate 100, glutamine 102, glutamate 107, aspartate 133, asparagine 135, glutamate 137, and glutamate 144.

This is an uncharacterized protein from Caenorhabditis elegans.